A 970-amino-acid chain; its full sequence is MDPHQSPADNAASPTKSVKATTKNSSTNNNVNSNNSNNNSNHDILNFNDNYTTILQHLANDHPNILREKGGSQQQQHQQQQQQQQQQQQQQQQQSLDTLLHHYQSLLSKSDNAIAFDDNVSNSADHNGSNSNNNNNNNDISSPGNLMGSCNQCRLKKTKCNYFPDLGNCLECETSRTKCTFSIAPNYLKRTSSGANNNMPTSSNSKRMKNFEDYSNRLPSSMLYRHQQQQQQQQQQQRIQYPRSSFFVGPASVFDLNLTKHVRLDNVDQIQLSKTLSLRKVSPTAQFILQDDFDTTLHSKQEYEVDLVENLVHPHGHLLVEIFFKLIHPFLPILHERVFLEKYSRSYRELTAPLLASIYSLALQYWDFHPALLGFPKPDVTAQLNNIALETFYARVGRPKLSIIQTGLLILQCRSECHNNWVLCSSVVALAEELGLGVECNDWKLPKWEKDLRKRLAWAVWLMDKWCALNEGRQSHLILGRNWMIKLLNFDDFPLNSPTILNSLQNDQSGSSPSSSNDVKNHQIAFGNLPIFNINPTLEDFKNGTLMFQQMVSLSIILGEIMDTFYTQGSMTINKSIEQVLKLAKPLQLKLREWYHSLPKNLSMSYATPQKLNSNSTLTLAYFATEITLHRKIICALNPQTPKELVQVCRTAARTRLVAAIEFIRDLKNEHINAFWYNCSTGNLMLIGTFAALLYVTSATKEEAMIFRDYVRNYTWVLKIGSKYFDKLSNALNNMHLLFAQIPGLLTDEPVVVSPNSNINSVNPQRSGVQSQIPIQFNVGSPAMTEQGSPLNQWKNLPQEILQQLNSFPNGTTSTTTPVNPTSRQTQLESQGSPAINSANNNSNNTPLPFAPNKSSKKTSQSSPNVTPSHMSRHPPSNTSSPRVNSSTNVNSNTQMNASPLTSINETRQESGDAADEKTAGRERTANEESSTELKDDNPNSNQETSATGNQTIKMNDDKNVTINTRETPL.

Disordered regions lie at residues 1-44, 64-95, and 118-140; these read MDPH…NHDI, NILR…QQQS, and DNVS…NNDI. Composition is skewed to low complexity over residues 15–41, 73–94, and 121–140; these read TKSV…NNSN, QQQQ…QQQQ, and SNSA…NNDI. A DNA-binding region (zn(2)-C6 fungal-type) is located at residues 150 to 179; it reads CNQCRLKKTKCNYFPDLGNCLECETSRTKC. The span at 807–823 shows a compositional bias: low complexity; it reads SFPNGTTSTTTPVNPTS. The tract at residues 807–970 is disordered; it reads SFPNGTTSTT…VTINTRETPL (164 aa). Composition is skewed to polar residues over residues 824-836 and 858-870; these read RQTQ…SPAI and KTSQ…TPSH. S833 is modified (phosphoserine). Positions 875 to 894 are enriched in low complexity; sequence PPSNTSSPRVNSSTNVNSNT. The span at 895-906 shows a compositional bias: polar residues; that stretch reads QMNASPLTSINE. A compositionally biased stretch (basic and acidic residues) spans 907–938; the sequence is TRQESGDAADEKTAGRERTANEESSTELKDDN. Polar residues-rich tracts occupy residues 939–954 and 961–970; these read PNSN…QTIK and VTINTRETPL.

Its subcellular location is the nucleus. Positive regulation of genes required for catabolism of GABA (UGA4, UGA1, and UGA2), urea (DUR1 and DUR2), arginine and allantoin. This is Transcriptional activator protein DAL81 (DAL81) from Saccharomyces cerevisiae (strain ATCC 204508 / S288c) (Baker's yeast).